Consider the following 125-residue polypeptide: Cytochrome c2 (125 aa).

Positions 1 to 21 (MKAIKIAMVGAALVWSASAYA) are cleaved as a signal peptide. Residues 23 to 123 (GDPVKGEQVF…DVIAFLATQH (101 aa)) form the Cytochrome c domain. Heme c is bound by residues Cys-35, Cys-38, His-39, and Met-101.

The protein belongs to the cytochrome c family. Binds 1 heme c group covalently per subunit.

Functionally, cytochrome c2 is found mainly in purple, non-sulfur, photosynthetic bacteria where it functions as the electron donor to the oxidized bacteriochlorophyll in the photophosphorylation pathway. However, it may also have a role in the respiratory chain and is found in some non-photosynthetic bacteria. The polypeptide is Cytochrome c2 (Rhodomicrobium vannielii (strain ATCC 17100 / DSM 162 / LMG 4299 / NCIMB 10020 / ATH 3.1.1)).